The sequence spans 463 residues: Elongation factor 1-alpha (463 aa).

In terms of domain architecture, tr-type G spans 5 to 242 (KVHINIVVIG…DSIIPPQRPT (238 aa)). A G1 region spans residues 14-21 (GHVDSGKS). 14–21 (GHVDSGKS) is a GTP binding site. The tract at residues 70–74 (GITID) is G2. The G3 stretch occupies residues 91–94 (DAPG). GTP contacts are provided by residues 91 to 95 (DAPGH) and 153 to 156 (NKMD). The interval 153-156 (NKMD) is G4. Residues 194–196 (SGF) form a G5 region. Residues E301 and E374 each carry the 5-glutamyl glycerylphosphorylethanolamine modification. The disordered stretch occupies residues 443-463 (KSDGSSGKVTKSAQKAAPKKK). The segment covering 446 to 455 (GSSGKVTKSA) has biased composition (polar residues).

Belongs to the TRAFAC class translation factor GTPase superfamily. Classic translation factor GTPase family. EF-Tu/EF-1A subfamily.

The protein resides in the cytoplasm. Functionally, this protein promotes the GTP-dependent binding of aminoacyl-tRNA to the A-site of ribosomes during protein biosynthesis. In Caenorhabditis elegans, this protein is Elongation factor 1-alpha.